The following is a 113-amino-acid chain: MPFQSTVGDYQTVATLETFGFLPPMTQDEIYDQIAYIIAQGWSPVIEHVHPSGSMQTYWSYWKLPFFGEKDLNMVVSELEACHRAYPDHHVRMVGYDAYTQSQGTAFVVFEGR.

This sequence belongs to the RuBisCO small chain family. Heterohexadecamer of 8 large and 8 small subunits. Forms a CsoS2-CsoS1-RuBisCO complex.

It is found in the carboxysome. Its function is as follows. RuBisCO catalyzes two reactions: the carboxylation of D-ribulose 1,5-bisphosphate, the primary event in carbon dioxide fixation, as well as the oxidative fragmentation of the pentose substrate in the photorespiration process. Both reactions occur simultaneously and in competition at the same active site. Although the small subunit is not catalytic it is essential for maximal activity. In Prochlorococcus marinus (strain MIT 9313), this protein is Ribulose bisphosphate carboxylase small subunit.